Consider the following 100-residue polypeptide: NADH-quinone oxidoreductase subunit K (100 aa).

Helical transmembrane passes span 1–21 (MIGLNHYLIVSGLLFCIGLAG), 28–48 (ILLLFFSTEIMLNAINIGFVA), and 64–84 (FIIAIAASEVAIGLGLVILWF).

This sequence belongs to the complex I subunit 4L family. As to quaternary structure, NDH-1 is composed of 14 different subunits. Subunits NuoA, H, J, K, L, M, N constitute the membrane sector of the complex.

The protein localises to the cell inner membrane. The enzyme catalyses a quinone + NADH + 5 H(+)(in) = a quinol + NAD(+) + 4 H(+)(out). Its function is as follows. NDH-1 shuttles electrons from NADH, via FMN and iron-sulfur (Fe-S) centers, to quinones in the respiratory chain. The immediate electron acceptor for the enzyme in this species is believed to be ubiquinone. Couples the redox reaction to proton translocation (for every two electrons transferred, four hydrogen ions are translocated across the cytoplasmic membrane), and thus conserves the redox energy in a proton gradient. The sequence is that of NADH-quinone oxidoreductase subunit K from Helicobacter pylori (strain Shi470).